Consider the following 171-residue polypeptide: MKFALVLLGVCAFYLVNATGDLETELEASELQELQEALDLIAETPLESLEAEELEEARKFKLPKINWGKLASKAKDVYKKGQKLAKNKNVKKALKYGKQLAENLAAGEVHEPGTPVGNNKCWAIGTRCTDDCDCCPEHHCHCPAKSWTFGLIPCSCQVTESDKVNKCPPAE.

An N-terminal signal peptide occupies residues 1–18; sequence MKFALVLLGVCAFYLVNA. Positions 19-58 are cleaved as a propeptide — removed in mature form; the sequence is TGDLETELEASELQELQEALDLIAETPLESLEAEELEEAR. A linear cationic cytotoxin domain region spans residues 59-104; the sequence is KFKLPKINWGKLASKAKDVYKKGQKLAKNKNVKKALKYGKQLAENL. One can recognise an Oxytoxin-type inhibitor cystine knot (ICK) domain in the interval 118-171; the sequence is NNKCWAIGTRCTDDCDCCPEHHCHCPAKSWTFGLIPCSCQVTESDKVNKCPPAE. 5 cysteine pairs are disulfide-bonded: C121/C135, C128/C140, C132/C167, C134/C156, and C142/C154.

Post-translationally, disulfide bonds. In terms of tissue distribution, expressed by the venom gland.

It localises to the secreted. In terms of biological role, has antimicrobial, insecticidal, cytolytic and cytotoxic activity. The protein is Spiderine-2a of Oxyopes takobius (Lynx spider).